Reading from the N-terminus, the 782-residue chain is Endonuclease MutS2 (782 aa).

Residue 336-343 participates in ATP binding; sequence GPNTGGKT. Positions 707–782 constitute a Smr domain; that stretch reads LDLRGYRYED…GFGVTVATLK (76 aa).

This sequence belongs to the DNA mismatch repair MutS family. MutS2 subfamily. In terms of assembly, homodimer. Binds to stalled ribosomes, contacting rRNA.

Endonuclease that is involved in the suppression of homologous recombination and thus may have a key role in the control of bacterial genetic diversity. Its function is as follows. Acts as a ribosome collision sensor, splitting the ribosome into its 2 subunits. Detects stalled/collided 70S ribosomes which it binds and splits by an ATP-hydrolysis driven conformational change. Acts upstream of the ribosome quality control system (RQC), a ribosome-associated complex that mediates the extraction of incompletely synthesized nascent chains from stalled ribosomes and their subsequent degradation. Probably generates substrates for RQC. This is Endonuclease MutS2 from Staphylococcus aureus (strain Mu50 / ATCC 700699).